The chain runs to 220 residues: Aspartic protease inhibitor 2 (220 aa).

Residues 1 to 23 (MMKCLFLLCLCLLPIVVFSSTFT) form the signal peptide. Residues 24 to 32 (SQNLIDLPS) constitute a propeptide that is removed on maturation. Positions 26–31 (NLIDLP) match the Vacuolar targeting signal motif. An N-linked (GlcNAc...) asparagine glycan is attached at asparagine 51. 2 disulfide bridges follow: cysteine 80-cysteine 125 and cysteine 174-cysteine 185.

The protein belongs to the protease inhibitor I3 (leguminous Kunitz-type inhibitor) family. As to expression, tubers.

Its subcellular location is the vacuole. Functionally, inhibitor of cathepsin D (aspartic protease). May also inhibit trypsin and chymotrypsin (serine proteases). Protects the plant by inhibiting proteases of invading organisms. This Solanum tuberosum (Potato) protein is Aspartic protease inhibitor 2.